A 93-amino-acid chain; its full sequence is Exodeoxyribonuclease 7 small subunit (93 aa).

Residues 61 to 75 are compositionally biased toward basic and acidic residues; it reads IDDNGDEKVYEKQTD. Residues 61–93 are disordered; sequence IDDNGDEKVYEKQTDDPSNNGGGNRGFGSADEQ.

The protein belongs to the XseB family. Heterooligomer composed of large and small subunits.

The protein localises to the cytoplasm. It catalyses the reaction Exonucleolytic cleavage in either 5'- to 3'- or 3'- to 5'-direction to yield nucleoside 5'-phosphates.. In terms of biological role, bidirectionally degrades single-stranded DNA into large acid-insoluble oligonucleotides, which are then degraded further into small acid-soluble oligonucleotides. This Limosilactobacillus reuteri (strain DSM 20016) (Lactobacillus reuteri) protein is Exodeoxyribonuclease 7 small subunit.